A 213-amino-acid polypeptide reads, in one-letter code: FMN-dependent NADH:quinone oxidoreductase (213 aa).

Ser-10 serves as a coordination point for FMN.

It belongs to the azoreductase type 1 family. As to quaternary structure, homodimer. FMN serves as cofactor.

It carries out the reaction 2 a quinone + NADH + H(+) = 2 a 1,4-benzosemiquinone + NAD(+). The enzyme catalyses N,N-dimethyl-1,4-phenylenediamine + anthranilate + 2 NAD(+) = 2-(4-dimethylaminophenyl)diazenylbenzoate + 2 NADH + 2 H(+). Quinone reductase that provides resistance to thiol-specific stress caused by electrophilic quinones. In terms of biological role, also exhibits azoreductase activity. Catalyzes the reductive cleavage of the azo bond in aromatic azo compounds to the corresponding amines. In Opitutus terrae (strain DSM 11246 / JCM 15787 / PB90-1), this protein is FMN-dependent NADH:quinone oxidoreductase.